We begin with the raw amino-acid sequence, 390 residues long: Leucine aminopeptidase 1 (390 aa).

The signal sequence occupies residues 1-18 (MKLSTALVLGATATGAWS). Positions 19-90 (YAIPQLEQEV…FPTLDAGSYV (72 aa)) are excised as a propeptide. Residue N120 is glycosylated (N-linked (GlcNAc...) asparagine). Zn(2+)-binding residues include H190, D209, E248, and D275. C324 and C328 form a disulfide bridge. H357 lines the Zn(2+) pocket.

The protein belongs to the peptidase M28 family. M28E subfamily. In terms of assembly, monomer. Requires Zn(2+) as cofactor.

The protein resides in the secreted. Extracellular aminopeptidase that allows assimilation of proteinaceous substrates. This chain is Leucine aminopeptidase 1 (lap1), found in Emericella nidulans (strain FGSC A4 / ATCC 38163 / CBS 112.46 / NRRL 194 / M139) (Aspergillus nidulans).